We begin with the raw amino-acid sequence, 565 residues long: Thiol:disulfide interchange protein DsbD (565 aa).

Residues 1–19 (MAQRIFTLILLLCSTSVFA) form the signal peptide. Intrachain disulfides connect Cys-122–Cys-128 and Cys-182–Cys-304. The next 7 membrane-spanning stretches (helical) occupy residues 163 to 183 (LPFS…TPCV), 208 to 228 (LLTF…GLVV), 243 to 263 (YVLI…FGLF), 289 to 309 (GVFI…TAPL), 323 to 343 (WLGG…LMLI), 357 to 377 (WMEQ…VFLL), and 384 to 404 (IWGL…AFIT). The Thioredoxin domain occupies 434-565 (WAFGATHTAQ…FSAHLRDRQP (132 aa)). A disulfide bond links Cys-480 and Cys-483.

This sequence belongs to the thioredoxin family. DsbD subfamily.

The protein localises to the cell inner membrane. It catalyses the reaction [protein]-dithiol + NAD(+) = [protein]-disulfide + NADH + H(+). It carries out the reaction [protein]-dithiol + NADP(+) = [protein]-disulfide + NADPH + H(+). In terms of biological role, required to facilitate the formation of correct disulfide bonds in some periplasmic proteins and for the assembly of the periplasmic c-type cytochromes. Acts by transferring electrons from cytoplasmic thioredoxin to the periplasm. This transfer involves a cascade of disulfide bond formation and reduction steps. This Escherichia coli O6:H1 (strain CFT073 / ATCC 700928 / UPEC) protein is Thiol:disulfide interchange protein DsbD.